The sequence spans 30 residues: GIPCGESCVFIPCISSVVGCSCKSKVCYRN.

The segment at residues 1 to 30 (GIPCGESCVFIPCISSVVGCSCKSKVCYRN) is a cross-link (cyclopeptide (Gly-Asn)). Intrachain disulfides connect C4–C20, C8–C22, and C13–C27.

The protein belongs to the cyclotide family. Bracelet subfamily. This is a cyclic peptide.

Probably participates in a plant defense mechanism. This is Cyclotide vdif-A from Viola diffusa.